The chain runs to 292 residues: Putative sugar lactone lactonase YvrE (292 aa).

3 residues coordinate a divalent metal cation: E15, N146, and D196.

Belongs to the SMP-30/CGR1 family. A divalent metal cation serves as cofactor.

It is found in the cytoplasm. The protein is Putative sugar lactone lactonase YvrE (yvrE) of Bacillus subtilis (strain 168).